A 509-amino-acid polypeptide reads, in one-letter code: Probable cytochrome P450 513A1 (509 aa).

Residues 2 to 19 (NYLVGLVLIFTIFYFFLQ) form a helical membrane-spanning segment. Heme is bound at residue Cys-454.

It belongs to the cytochrome P450 family. Requires heme as cofactor.

It localises to the membrane. This is Probable cytochrome P450 513A1 (cyp513A1) from Dictyostelium discoideum (Social amoeba).